The following is a 78-amino-acid chain: UPF0270 protein YPO0179/y3960/YP_0178 (78 aa).

Belongs to the UPF0270 family.

This chain is UPF0270 protein YPO0179/y3960/YP_0178, found in Yersinia pestis.